A 214-amino-acid chain; its full sequence is Probable transaldolase (214 aa).

Residue K83 is the Schiff-base intermediate with substrate of the active site.

It belongs to the transaldolase family. Type 3B subfamily.

The protein resides in the cytoplasm. It catalyses the reaction D-sedoheptulose 7-phosphate + D-glyceraldehyde 3-phosphate = D-erythrose 4-phosphate + beta-D-fructose 6-phosphate. It functions in the pathway carbohydrate degradation; pentose phosphate pathway; D-glyceraldehyde 3-phosphate and beta-D-fructose 6-phosphate from D-ribose 5-phosphate and D-xylulose 5-phosphate (non-oxidative stage): step 2/3. In terms of biological role, transaldolase is important for the balance of metabolites in the pentose-phosphate pathway. This is Probable transaldolase from Leptospira interrogans serogroup Icterohaemorrhagiae serovar copenhageni (strain Fiocruz L1-130).